Here is a 400-residue protein sequence, read N- to C-terminus: Aspartate/prephenate aminotransferase (400 aa).

Positions 39, 125, and 175 each coordinate L-aspartate. At lysine 239 the chain carries N6-(pyridoxal phosphate)lysine. L-aspartate is bound at residue arginine 375.

It belongs to the class-I pyridoxal-phosphate-dependent aminotransferase family. Homodimer. Pyridoxal 5'-phosphate serves as cofactor.

Its subcellular location is the cytoplasm. The catalysed reaction is L-aspartate + 2-oxoglutarate = oxaloacetate + L-glutamate. The enzyme catalyses L-arogenate + 2-oxoglutarate = prephenate + L-glutamate. Its function is as follows. Catalyzes the reversible conversion of aspartate and 2-oxoglutarate to glutamate and oxaloacetate. Can also transaminate prephenate in the presence of glutamate. Required for symbiotic nitrogen fixation. This is Aspartate/prephenate aminotransferase from Rhizobium meliloti (strain 1021) (Ensifer meliloti).